A 1829-amino-acid polypeptide reads, in one-letter code: Iron-regulated protein FrpC (1829 aa).

22 Hemolysin-type calcium-binding repeats span residues 869 to 886 (FGHN…NDTL), 887 to 904 (IGGA…SDTY), 1015 to 1032 (NGGL…DDLL), 1033 to 1050 (NGDA…NDTL), 1051 to 1068 (DGGE…NDAL), 1069 to 1086 (NGGE…NDTL), 1087 to 1104 (IGGA…SDTY), 1215 to 1232 (NGGL…DDLL), 1233 to 1250 (NGDA…NDTL), 1251 to 1268 (DGGE…NDAL), 1269 to 1286 (NGGE…NDTL), 1287 to 1304 (IGGA…SDTY), 1415 to 1432 (NGGL…DDLL), 1433 to 1450 (NGDA…NDTL), 1451 to 1468 (NGGE…NDAL), 1469 to 1486 (NGGE…NDTL), 1487 to 1504 (IGGA…SDTY), 1615 to 1632 (NGGL…DDLL), 1633 to 1650 (NGDA…NDTL), 1651 to 1668 (DGGE…NDAL), 1669 to 1686 (NGGE…NDTL), and 1687 to 1704 (IGGA…SDTY). Residues 1671–1690 (GEGNDHLNGEDGNDTLIGGA) form a disordered region.

The protein belongs to the RTX prokaryotic toxin (TC 1.C.11) family.

The protein localises to the cell outer membrane. Its subcellular location is the secreted. Its function is as follows. May participate in the pathogenesis of meningococcal disease. The sequence is that of Iron-regulated protein FrpC (frpC) from Neisseria meningitidis serogroup B (strain ATCC BAA-335 / MC58).